The primary structure comprises 242 residues: NAD(P)H-quinone oxidoreductase subunit K (242 aa).

Residues Cys-59, Cys-60, Cys-124, and Cys-155 each coordinate [4Fe-4S] cluster.

The protein belongs to the complex I 20 kDa subunit family. In terms of assembly, NDH-1 can be composed of about 15 different subunits; different subcomplexes with different compositions have been identified which probably have different functions. It depends on [4Fe-4S] cluster as a cofactor.

The protein localises to the cellular thylakoid membrane. It carries out the reaction a plastoquinone + NADH + (n+1) H(+)(in) = a plastoquinol + NAD(+) + n H(+)(out). The catalysed reaction is a plastoquinone + NADPH + (n+1) H(+)(in) = a plastoquinol + NADP(+) + n H(+)(out). Functionally, NDH-1 shuttles electrons from an unknown electron donor, via FMN and iron-sulfur (Fe-S) centers, to quinones in the respiratory and/or the photosynthetic chain. The immediate electron acceptor for the enzyme in this species is believed to be plastoquinone. Couples the redox reaction to proton translocation, and thus conserves the redox energy in a proton gradient. Cyanobacterial NDH-1 also plays a role in inorganic carbon-concentration. The sequence is that of NAD(P)H-quinone oxidoreductase subunit K from Synechococcus sp. (strain RCC307).